The chain runs to 542 residues: Phenylalanine--tRNA ligase beta subunit (542 aa).

In terms of domain architecture, B5 spans 269–344; the sequence is LRRYTVSVSA…MTIGYDKLSP (76 aa). Residues aspartate 322, aspartate 328, glutamate 331, and glutamate 332 each coordinate Mg(2+).

The protein belongs to the phenylalanyl-tRNA synthetase beta subunit family. Type 2 subfamily. Tetramer of two alpha and two beta subunits. It depends on Mg(2+) as a cofactor.

It is found in the cytoplasm. It carries out the reaction tRNA(Phe) + L-phenylalanine + ATP = L-phenylalanyl-tRNA(Phe) + AMP + diphosphate + H(+). The chain is Phenylalanine--tRNA ligase beta subunit from Sulfolobus acidocaldarius (strain ATCC 33909 / DSM 639 / JCM 8929 / NBRC 15157 / NCIMB 11770).